The following is a 230-amino-acid chain: UPF0173 metal-dependent hydrolase RSKD131_0588 (230 aa).

Belongs to the UPF0173 family.

This Cereibacter sphaeroides (strain KD131 / KCTC 12085) (Rhodobacter sphaeroides) protein is UPF0173 metal-dependent hydrolase RSKD131_0588.